We begin with the raw amino-acid sequence, 128 residues long: Virion-associated protein (128 aa).

Coiled-coil stretches lie at residues 1–30 and 37–58; these read MNLA…ILAK and ESSN…EMKE. The interval 98 to 128 is disordered; that stretch reads FDVGNEGMGSSTNPNALKWPPTEKPQPWPPR. Positions 119 to 128 are enriched in pro residues; that stretch reads TEKPQPWPPR. The tract at residues 122–128 is capsid binding; sequence PQPWPPR.

The protein belongs to the caulimovirus ORF III family. As to quaternary structure, homotetramer, through coiled-coil domain. Homotrimer when interacts with icosehadral capsid. Interacts with capsid protein, and with Movement protein.

The protein localises to the virion. Its subcellular location is the host cell junction. It localises to the host plasmodesma. Functionally, plays a role in virus cell-to-cell and plant-to-plant transmission. Interacts with virion icosahedral capsid and movement protein, thereby facilitating virion cell-to-cell transmission through plasmodesmata opened by viral movement protein. Also interacts with aphid transmission factor, attaching the virion to aphid stylet when the animal feeds on an virus infected plant. Aphid saliva may later detach the virion, inducing release of infectious particles when the animal feeds on a new plant. In Carnation etched ring virus (CERV), this protein is Virion-associated protein.